Consider the following 393-residue polypeptide: S-adenosylmethionine synthase (393 aa).

Glu9 lines the Mg(2+) pocket. His15 lines the ATP pocket. Residue Glu43 coordinates K(+). Positions 56 and 99 each coordinate L-methionine. Residues 167–169 (DGK), 235–238 (SGRF), Asp246, 252–253 (RK), Ala269, Lys273, and Lys277 contribute to the ATP site. L-methionine is bound at residue Asp246. Lys277 lines the L-methionine pocket.

It belongs to the AdoMet synthase family. As to quaternary structure, homotetramer. Mn(2+) serves as cofactor. It depends on Mg(2+) as a cofactor. Requires Co(2+) as cofactor. The cofactor is K(+).

The protein localises to the cytoplasm. It carries out the reaction L-methionine + ATP + H2O = S-adenosyl-L-methionine + phosphate + diphosphate. The protein operates within amino-acid biosynthesis; S-adenosyl-L-methionine biosynthesis; S-adenosyl-L-methionine from L-methionine: step 1/1. Its function is as follows. Catalyzes the formation of S-adenosylmethionine from methionine and ATP. The reaction comprises two steps that are both catalyzed by the same enzyme: formation of S-adenosylmethionine (AdoMet) and triphosphate, and subsequent hydrolysis of the triphosphate. The protein is S-adenosylmethionine synthase (SAM) of Camellia sinensis (Tea plant).